A 108-amino-acid polypeptide reads, in one-letter code: UPF0145 protein LCABL_07110 (108 aa).

The protein belongs to the UPF0145 family.

This Lacticaseibacillus casei (strain BL23) (Lactobacillus casei) protein is UPF0145 protein LCABL_07110.